An 834-amino-acid polypeptide reads, in one-letter code: DNA polymerase I, thermostable (834 aa).

Residues 176 to 262 enclose the 5'-3' exonuclease domain; it reads RPEQWVDFRA…DLPLEVDLAQ (87 aa). The polymerase stretch occupies residues 412–834; the sequence is ERLHRNLLKR…MGEDWLSAKG (423 aa).

It belongs to the DNA polymerase type-A family.

It catalyses the reaction DNA(n) + a 2'-deoxyribonucleoside 5'-triphosphate = DNA(n+1) + diphosphate. In addition to polymerase activity, this DNA polymerase exhibits 5'-3' exonuclease activity. This Thermus thermophilus (strain ATCC 27634 / DSM 579 / HB8) protein is DNA polymerase I, thermostable (polA).